The following is a 437-amino-acid chain: Phosphatidylserine decarboxylase proenzyme 1, mitochondrial (437 aa).

A mitochondrion-targeting transit peptide spans 1 to 18 (MLKFHRNVKPQFGAFARY). Topologically, residues 19–38 (SSLGKHNSRKRVGIIRLAYG) are mitochondrial matrix. Residues 39 to 57 (LTGIGLVGLAGFAWAQDRH) traverse the membrane as a helical segment. Residues 58 to 437 (EKTYQKKGVQ…PLGRVVPSSH (380 aa)) are Mitochondrial intermembrane-facing. Catalysis depends on charge relay system; for autoendoproteolytic cleavage activity residues Asp157, His287, and Ser401. The active-site Schiff-base intermediate with substrate; via pyruvic acid; for decarboxylase activity is Ser401. At Ser401 the chain carries Pyruvic acid (Ser); by autocatalysis.

It belongs to the phosphatidylserine decarboxylase family. PSD-B subfamily. Eukaryotic type I sub-subfamily. As to quaternary structure, heterodimer of a large membrane-associated beta subunit and a small pyruvoyl-containing alpha subunit. The cofactor is pyruvate. Is synthesized initially as an inactive proenzyme. Formation of the active enzyme involves a self-maturation process in which the active site pyruvoyl group is generated from an internal serine residue via an autocatalytic post-translational modification. Two non-identical subunits are generated from the proenzyme in this reaction, and the pyruvate is formed at the N-terminus of the alpha chain, which is derived from the carboxyl end of the proenzyme. The autoendoproteolytic cleavage occurs by a canonical serine protease mechanism, in which the side chain hydroxyl group of the serine supplies its oxygen atom to form the C-terminus of the beta chain, while the remainder of the serine residue undergoes an oxidative deamination to produce ammonia and the pyruvoyl prosthetic group on the alpha chain. During this reaction, the Ser that is part of the protease active site of the proenzyme becomes the pyruvoyl prosthetic group, which constitutes an essential element of the active site of the mature decarboxylase.

The protein resides in the mitochondrion. Its subcellular location is the mitochondrion inner membrane. The catalysed reaction is a 1,2-diacyl-sn-glycero-3-phospho-L-serine + H(+) = a 1,2-diacyl-sn-glycero-3-phosphoethanolamine + CO2. Its pathway is phospholipid metabolism; phosphatidylethanolamine biosynthesis; phosphatidylethanolamine from CDP-diacylglycerol: step 2/2. Its function is as follows. Catalyzes the formation of phosphatidylethanolamine (PtdEtn) from phosphatidylserine (PtdSer). Plays a central role in phospholipid metabolism and in the interorganelle trafficking of phosphatidylserine. Together with psd2 and psd3, responsible for the majority of phosphatidylethanolamine synthesis. The polypeptide is Phosphatidylserine decarboxylase proenzyme 1, mitochondrial (Schizosaccharomyces pombe (strain 972 / ATCC 24843) (Fission yeast)).